Reading from the N-terminus, the 103-residue chain is UPF0145 protein pXO2-45/BXB0052/GBAA_pXO2_0052 (103 aa).

This sequence belongs to the UPF0145 family.

The chain is UPF0145 protein pXO2-45/BXB0052/GBAA_pXO2_0052 from Bacillus anthracis.